The following is a 356-amino-acid chain: Methionine import ATP-binding protein MetN (356 aa).

Residues 7 to 250 form the ABC transporter domain; sequence IKLDNIDVTF…PRESLTQDFI (244 aa). An ATP-binding site is contributed by 43–50; sequence GYSGAGKS.

Belongs to the ABC transporter superfamily. Methionine importer (TC 3.A.1.24) family. In terms of assembly, the complex is composed of two ATP-binding proteins (MetN), two transmembrane proteins (MetI) and a solute-binding protein (MetQ).

It is found in the cell membrane. It carries out the reaction L-methionine(out) + ATP + H2O = L-methionine(in) + ADP + phosphate + H(+). The catalysed reaction is D-methionine(out) + ATP + H2O = D-methionine(in) + ADP + phosphate + H(+). In terms of biological role, part of the ABC transporter complex MetNIQ involved in methionine import. Responsible for energy coupling to the transport system. This is Methionine import ATP-binding protein MetN from Streptococcus agalactiae serotype Ia (strain ATCC 27591 / A909 / CDC SS700).